The sequence spans 157 residues: NADPH-dependent 7-cyano-7-deazaguanine reductase (157 aa).

The active-site Thioimide intermediate is the Cys-56. The active-site Proton donor is Asp-63. Substrate contacts are provided by residues 78-80 (VES) and 97-98 (HE).

It belongs to the GTP cyclohydrolase I family. QueF type 1 subfamily.

It is found in the cytoplasm. The catalysed reaction is 7-aminomethyl-7-carbaguanine + 2 NADP(+) = 7-cyano-7-deazaguanine + 2 NADPH + 3 H(+). The protein operates within tRNA modification; tRNA-queuosine biosynthesis. Catalyzes the NADPH-dependent reduction of 7-cyano-7-deazaguanine (preQ0) to 7-aminomethyl-7-deazaguanine (preQ1). The chain is NADPH-dependent 7-cyano-7-deazaguanine reductase from Parabacteroides distasonis (strain ATCC 8503 / DSM 20701 / CIP 104284 / JCM 5825 / NCTC 11152).